We begin with the raw amino-acid sequence, 330 residues long: Beta-ketoacyl-[acyl-carrier-protein] synthase III (330 aa).

Residues cysteine 114 and histidine 255 contribute to the active site. The segment at 256–260 (QANQR) is ACP-binding. Asparagine 285 is a catalytic residue.

Belongs to the thiolase-like superfamily. FabH family. In terms of assembly, homodimer.

The protein resides in the cytoplasm. The enzyme catalyses malonyl-[ACP] + acetyl-CoA + H(+) = 3-oxobutanoyl-[ACP] + CO2 + CoA. Its pathway is lipid metabolism; fatty acid biosynthesis. Catalyzes the condensation reaction of fatty acid synthesis by the addition to an acyl acceptor of two carbons from malonyl-ACP. Catalyzes the first condensation reaction which initiates fatty acid synthesis and may therefore play a role in governing the total rate of fatty acid production. Possesses both acetoacetyl-ACP synthase and acetyl transacylase activities. Its substrate specificity determines the biosynthesis of branched-chain and/or straight-chain of fatty acids. The polypeptide is Beta-ketoacyl-[acyl-carrier-protein] synthase III (Trichormus variabilis (strain ATCC 29413 / PCC 7937) (Anabaena variabilis)).